Consider the following 426-residue polypeptide: Dihydroorotase (426 aa).

Residues histidine 58 and histidine 60 each contribute to the Zn(2+) site. Substrate is bound by residues 60-62 (HLR) and asparagine 92. Residues aspartate 150, histidine 177, and histidine 230 each coordinate Zn(2+). Asparagine 276 provides a ligand contact to substrate. Position 303 (aspartate 303) interacts with Zn(2+). The active site involves aspartate 303. Residues histidine 307 and 321–322 (FG) each bind substrate.

Belongs to the metallo-dependent hydrolases superfamily. DHOase family. Class I DHOase subfamily. It depends on Zn(2+) as a cofactor.

The catalysed reaction is (S)-dihydroorotate + H2O = N-carbamoyl-L-aspartate + H(+). It functions in the pathway pyrimidine metabolism; UMP biosynthesis via de novo pathway; (S)-dihydroorotate from bicarbonate: step 3/3. Its function is as follows. Catalyzes the reversible cyclization of carbamoyl aspartate to dihydroorotate. In Listeria monocytogenes serotype 4b (strain F2365), this protein is Dihydroorotase.